The following is a 118-amino-acid chain: MPRPPKWRWVRSEPNVTYFKPVGIPLSMLEEVILTVEELEAIRLKDLEGLEQEECADMMKVSRPTFFRIITSARQKIADALVNGKAIRVEGGNYKVYGEDMRGHGGMRHRHGWYNEED.

Belongs to the UPF0251 family.

This chain is UPF0251 protein TTE1845, found in Caldanaerobacter subterraneus subsp. tengcongensis (strain DSM 15242 / JCM 11007 / NBRC 100824 / MB4) (Thermoanaerobacter tengcongensis).